The primary structure comprises 621 residues: Methionine--tRNA ligase (621 aa).

The 'HIGH' region motif lies at 11 to 21; it reads PYANGPRHIGH. C143, C146, C156, and C159 together coordinate Zn(2+). The short motif at 347-351 is the 'KMSKS' region element; it reads KFSSS. S350 is a binding site for ATP.

This sequence belongs to the class-I aminoacyl-tRNA synthetase family. MetG type 1 subfamily. As to quaternary structure, monomer. It depends on Zn(2+) as a cofactor.

Its subcellular location is the cytoplasm. It catalyses the reaction tRNA(Met) + L-methionine + ATP = L-methionyl-tRNA(Met) + AMP + diphosphate. In terms of biological role, is required not only for elongation of protein synthesis but also for the initiation of all mRNA translation through initiator tRNA(fMet) aminoacylation. The polypeptide is Methionine--tRNA ligase (Bifidobacterium longum (strain NCC 2705)).